The primary structure comprises 957 residues: Valine--tRNA ligase (957 aa).

Residues 47-57 carry the 'HIGH' region motif; sequence PNITGQLHLGH. A 'KMSKS' region motif is present at residues 558–562; the sequence is KMSKS. Lys-561 contacts ATP. Residues 889-918 are a coiled coil; sequence FNKENEINRLKKESELINRKIETIQKLLDD.

Belongs to the class-I aminoacyl-tRNA synthetase family. ValS type 1 subfamily. In terms of assembly, monomer.

The protein resides in the cytoplasm. It catalyses the reaction tRNA(Val) + L-valine + ATP = L-valyl-tRNA(Val) + AMP + diphosphate. Its function is as follows. Catalyzes the attachment of valine to tRNA(Val). As ValRS can inadvertently accommodate and process structurally similar amino acids such as threonine, to avoid such errors, it has a 'posttransfer' editing activity that hydrolyzes mischarged Thr-tRNA(Val) in a tRNA-dependent manner. This is Valine--tRNA ligase from Blochmanniella pennsylvanica (strain BPEN).